Here is a 419-residue protein sequence, read N- to C-terminus: UDP-N-acetylglucosamine 1-carboxyvinyltransferase (419 aa).

22–23 (KN) provides a ligand contact to phosphoenolpyruvate. Residue arginine 92 coordinates UDP-N-acetyl-alpha-D-glucosamine. Catalysis depends on cysteine 116, which acts as the Proton donor. Cysteine 116 carries the 2-(S-cysteinyl)pyruvic acid O-phosphothioketal modification. Residues 121 to 125 (RPVDQ), aspartate 306, and isoleucine 328 each bind UDP-N-acetyl-alpha-D-glucosamine.

It belongs to the EPSP synthase family. MurA subfamily.

The protein localises to the cytoplasm. The catalysed reaction is phosphoenolpyruvate + UDP-N-acetyl-alpha-D-glucosamine = UDP-N-acetyl-3-O-(1-carboxyvinyl)-alpha-D-glucosamine + phosphate. It participates in cell wall biogenesis; peptidoglycan biosynthesis. Its function is as follows. Cell wall formation. Adds enolpyruvyl to UDP-N-acetylglucosamine. Target for the antibiotic phosphomycin. The sequence is that of UDP-N-acetylglucosamine 1-carboxyvinyltransferase from Acinetobacter guillouiae (Acinetobacter genomosp. 11).